A 512-amino-acid chain; its full sequence is Tabersonine 16-hydroxylase 2 (512 aa).

Residue Met1 is a topological domain, lumenal. The helical transmembrane segment at 2–22 (ELYYFSTFAFLLFCFILAKTL) threads the bilayer. The Cytoplasmic segment spans residues 23–512 (KKSGQSNLKL…YSASSLKGKY (490 aa)). Residue Cys445 participates in heme binding.

The protein belongs to the cytochrome P450 family. Requires heme as cofactor. As to expression, expressed at low levels in roots, fruits, stems, flower buds and flowers, but highly expressed in young leaves. Detected in adaxial and abaxial epidermis cells.

It localises to the endoplasmic reticulum membrane. The enzyme catalyses (-)-tabersonine + reduced [NADPH--hemoprotein reductase] + O2 = 16-hydroxytabersonine + oxidized [NADPH--hemoprotein reductase] + H2O + H(+). Its function is as follows. Involved in the foliar biosynthesis of vindoline, a precursor of vinblastine and vincristine. Hydroxylates specifically tabersonine, 2,3-dihydrotabersonine and 2,3-dihydro-3-hydroxytabersonine, but has no activity with naringenin, tryptamine, secologanin, strictosidine, ajmalicine, vindoline and catharanthine. This Catharanthus roseus (Madagascar periwinkle) protein is Tabersonine 16-hydroxylase 2.